The following is a 577-amino-acid chain: Adenine deaminase (577 aa).

The protein belongs to the metallo-dependent hydrolases superfamily. Adenine deaminase family. Requires Mn(2+) as cofactor.

It carries out the reaction adenine + H2O + H(+) = hypoxanthine + NH4(+). The sequence is that of Adenine deaminase from Bacillus velezensis (strain DSM 23117 / BGSC 10A6 / LMG 26770 / FZB42) (Bacillus amyloliquefaciens subsp. plantarum).